Here is a 295-residue protein sequence, read N- to C-terminus: 4-hydroxy-tetrahydrodipicolinate synthase (295 aa).

Pyruvate is bound at residue Thr-46. Catalysis depends on Tyr-134, which acts as the Proton donor/acceptor. Lys-162 (schiff-base intermediate with substrate) is an active-site residue. Position 205 (Ile-205) interacts with pyruvate.

It belongs to the DapA family. As to quaternary structure, homotetramer; dimer of dimers.

The protein resides in the cytoplasm. It catalyses the reaction L-aspartate 4-semialdehyde + pyruvate = (2S,4S)-4-hydroxy-2,3,4,5-tetrahydrodipicolinate + H2O + H(+). Its pathway is amino-acid biosynthesis; L-lysine biosynthesis via DAP pathway; (S)-tetrahydrodipicolinate from L-aspartate: step 3/4. Functionally, catalyzes the condensation of (S)-aspartate-beta-semialdehyde [(S)-ASA] and pyruvate to 4-hydroxy-tetrahydrodipicolinate (HTPA). This Anaeromyxobacter sp. (strain K) protein is 4-hydroxy-tetrahydrodipicolinate synthase.